We begin with the raw amino-acid sequence, 364 residues long: MEPLLSFKSVSKQYDDMQILDKIDIDIESGYFYTLLGPSGCGKTTILKLIAGFEEADNGDIIYQGKSINHLSANKRKVNTVFQDYALFPHLNVYDNIAFGLKLKKLAKSEIKRKVHEALKLVKLEGYESRTIEGISGGQKQRIAIARAIVNEPEILLLDESLSALDLKLRTEMQYELREIQSRLGITFIFVTHDQEEALALSDYIFVMKDGKIQQFGTPIDIYDEPVNRFVADFIGESNIVEGKMVKDYLVNIYGQDFECVDMGIPEQKKVEIVIRPEDISLIDAKSGLFEVTVDSMLFRGVHYEINCIDRKGYEWMIHSTKKAEVGSKVGLYFDPEAIHIMVPGETEEEFDKRIESYEEQDNA.

One can recognise an ABC transporter domain in the interval 5-235 (LSFKSVSKQY…PVNRFVADFI (231 aa)). 37–44 (GPSGCGKT) provides a ligand contact to ATP.

Belongs to the ABC transporter superfamily. Spermidine/putrescine importer (TC 3.A.1.11.1) family. In terms of assembly, the complex is composed of two ATP-binding proteins (PotA), two transmembrane proteins (PotB and PotC) and a solute-binding protein (PotD).

Its subcellular location is the cell membrane. It carries out the reaction ATP + H2O + polyamine-[polyamine-binding protein]Side 1 = ADP + phosphate + polyamineSide 2 + [polyamine-binding protein]Side 1.. Part of the ABC transporter complex PotABCD involved in spermidine/putrescine import. Responsible for energy coupling to the transport system. The sequence is that of Spermidine/putrescine import ATP-binding protein PotA from Staphylococcus saprophyticus subsp. saprophyticus (strain ATCC 15305 / DSM 20229 / NCIMB 8711 / NCTC 7292 / S-41).